A 260-amino-acid polypeptide reads, in one-letter code: UPF0294 protein YE0917 (260 aa).

This sequence belongs to the UPF0294 family.

It localises to the cytoplasm. The polypeptide is UPF0294 protein YE0917 (Yersinia enterocolitica serotype O:8 / biotype 1B (strain NCTC 13174 / 8081)).